A 268-amino-acid polypeptide reads, in one-letter code: Interleukin-2 receptor subunit alpha (268 aa).

The N-terminal stretch at Met1–Ala21 is a signal peptide. Residues Glu22 to Ser79 enclose the Sushi 1 domain. Topologically, residues Glu22–Lys236 are extracellular. 3 disulfide bridges follow: Cys24-Cys66, Cys49-Cys75, and Cys51-Cys77. 2 N-linked (GlcNAc...) asparagine glycosylation sites follow: Asn33 and Asn43. Residues Arg86–Thr109 form a disordered region. Over residues Gln88–Thr109 the composition is skewed to polar residues. Asn116 carries N-linked (GlcNAc...) asparagine glycosylation. One can recognise a Sushi 2 domain in the interval Gly119–Asp182. 2 cysteine pairs are disulfide-bonded: Cys121-Cys164 and Cys148-Cys180. The disordered stretch occupies residues Phe189–Pro219. Positions Glu193 to Ile211 are enriched in polar residues. A helical membrane pass occupies residues Val237–Trp257. The Cytoplasmic portion of the chain corresponds to Gln258 to Ile268.

As to quaternary structure, non-covalent dimer of an alpha and a beta subunit. IL2R exists in 3 different forms: a high affinity dimer, an intermediate affinity monomer (beta subunit), and a low affinity monomer (alpha subunit). The high and intermediate affinity forms also associate with a gamma subunit.

Its subcellular location is the membrane. Its function is as follows. Receptor for interleukin-2. The receptor is involved in the regulation of immune tolerance by controlling regulatory T cells (TREGs) activity. TREGs suppress the activation and expansion of autoreactive T-cells. The polypeptide is Interleukin-2 receptor subunit alpha (Il2ra) (Mus musculus (Mouse)).